Here is a 150-residue protein sequence, read N- to C-terminus: 3-dehydroquinate dehydratase (150 aa).

The active-site Proton acceptor is the Y26. N77, H83, and D90 together coordinate substrate. The active-site Proton donor is the H103. Substrate is bound by residues 104–105 and R114; that span reads LS.

It belongs to the type-II 3-dehydroquinase family. In terms of assembly, homododecamer.

It carries out the reaction 3-dehydroquinate = 3-dehydroshikimate + H2O. The protein operates within metabolic intermediate biosynthesis; chorismate biosynthesis; chorismate from D-erythrose 4-phosphate and phosphoenolpyruvate: step 3/7. Its function is as follows. Catalyzes a trans-dehydration via an enolate intermediate. The polypeptide is 3-dehydroquinate dehydratase (Photobacterium profundum (strain SS9)).